The following is an 800-amino-acid chain: Putative antiporter subunit mnhA2 (800 aa).

20 consecutive transmembrane segments (helical) span residues Met1–Ser21, Ile33–Ala53, Gly78–Ala98, Leu118–Phe138, Phe167–Met187, Gly207–Phe227, Thr241–Leu261, Tyr273–Leu293, Gly300–Gly320, Ile331–Ile351, Leu387–Ser407, Phe424–Phe444, Pro472–Val492, Gly527–Ile547, Ile595–Leu615, Gly627–Ile647, Leu651–Met671, Leu676–Ser696, Ile712–Thr732, and Leu768–Leu788.

It belongs to the CPA3 antiporters (TC 2.A.63) subunit A family. May form a heterooligomeric complex that consists of seven subunits: mnhA2, mnhB2, mnhC2, mnhD2, mnhE2, mnhF2 and mnhG2.

Its subcellular location is the cell membrane. This chain is Putative antiporter subunit mnhA2 (mnhA2), found in Staphylococcus aureus (strain MSSA476).